We begin with the raw amino-acid sequence, 351 residues long: Large ribosomal subunit protein uL3 (351 aa).

2 disordered regions span residues 1-31 (MGHRKLASPRRGSAGLRPRKRSSELLPTPRT) and 246-271 (KGSRKIGTRGPSLGTPSYTPQPGQLG).

Belongs to the universal ribosomal protein uL3 family. Part of the 50S ribosomal subunit. Forms a cluster with proteins L14 and L24e.

Functionally, one of the primary rRNA binding proteins, it binds directly near the 3'-end of the 23S rRNA, where it nucleates assembly of the 50S subunit. This chain is Large ribosomal subunit protein uL3, found in Saccharolobus islandicus (strain Y.N.15.51 / Yellowstone #2) (Sulfolobus islandicus).